The chain runs to 123 residues: Large ribosomal subunit protein bL12 (123 aa).

It belongs to the bacterial ribosomal protein bL12 family. In terms of assembly, homodimer. Part of the ribosomal stalk of the 50S ribosomal subunit. Forms a multimeric L10(L12)X complex, where L10 forms an elongated spine to which 2 to 4 L12 dimers bind in a sequential fashion. Binds GTP-bound translation factors.

Forms part of the ribosomal stalk which helps the ribosome interact with GTP-bound translation factors. Is thus essential for accurate translation. The protein is Large ribosomal subunit protein bL12 of Shewanella amazonensis (strain ATCC BAA-1098 / SB2B).